The chain runs to 235 residues: uncharacterized protein (235 aa).

A disordered region spans residues 1–98 (MDTKLSVTGA…NKKNTLHYSK (98 aa)). Residues lysine 16 and lysine 35 each participate in a glycyl lysine isopeptide (Lys-Gly) (interchain with G-Cter in ubiquitin) cross-link. Residues 38–50 (NGNKKRNKNRNRN) show a composition bias toward basic residues. Basic and acidic residues predominate over residues 51–60 (KKTETKEQNE).

This is an uncharacterized protein from Saccharomyces cerevisiae (strain ATCC 204508 / S288c) (Baker's yeast).